The following is a 201-amino-acid chain: Glycerol-3-phosphate acyltransferase (201 aa).

5 helical membrane-spanning segments follow: residues 10-30 (MLIG…GLIL), 60-80 (LAAA…LIAA), 86-106 (AAIA…WIGF), 116-136 (LGVL…AWIV), and 166-186 (ALAA…RANI).

This sequence belongs to the PlsY family. As to quaternary structure, probably interacts with PlsX.

Its subcellular location is the cell inner membrane. It carries out the reaction an acyl phosphate + sn-glycerol 3-phosphate = a 1-acyl-sn-glycero-3-phosphate + phosphate. It functions in the pathway lipid metabolism; phospholipid metabolism. Its function is as follows. Catalyzes the transfer of an acyl group from acyl-phosphate (acyl-PO(4)) to glycerol-3-phosphate (G3P) to form lysophosphatidic acid (LPA). This enzyme utilizes acyl-phosphate as fatty acyl donor, but not acyl-CoA or acyl-ACP. The polypeptide is Glycerol-3-phosphate acyltransferase (Brucella melitensis biotype 2 (strain ATCC 23457)).